The sequence spans 336 residues: tRNA(Ile)-lysidine synthase (336 aa).

32–37 (SGGQDS) lines the ATP pocket.

Belongs to the tRNA(Ile)-lysidine synthase family.

It localises to the cytoplasm. It carries out the reaction cytidine(34) in tRNA(Ile2) + L-lysine + ATP = lysidine(34) in tRNA(Ile2) + AMP + diphosphate + H(+). In terms of biological role, ligates lysine onto the cytidine present at position 34 of the AUA codon-specific tRNA(Ile) that contains the anticodon CAU, in an ATP-dependent manner. Cytidine is converted to lysidine, thus changing the amino acid specificity of the tRNA from methionine to isoleucine. The polypeptide is tRNA(Ile)-lysidine synthase (Synechococcus sp. (strain JA-3-3Ab) (Cyanobacteria bacterium Yellowstone A-Prime)).